A 196-amino-acid chain; its full sequence is DnaA initiator-associating protein DiaA (196 aa).

Residues 34 to 196 (LVQSLLNGNK…DNTLFPHQDD (163 aa)) enclose the SIS domain.

Belongs to the SIS family. DiaA subfamily. In terms of assembly, homotetramer; dimer of dimers.

Required for the timely initiation of chromosomal replication via direct interactions with the DnaA initiator protein. This chain is DnaA initiator-associating protein DiaA, found in Yersinia pseudotuberculosis serotype O:1b (strain IP 31758).